The primary structure comprises 252 residues: Acetoacetate decarboxylase (252 aa).

Lys116 (schiff-base intermediate with acetoacetate) is an active-site residue.

It belongs to the ADC family.

The enzyme catalyses acetoacetate + H(+) = acetone + CO2. Its function is as follows. Catalyzes the conversion of acetoacetate to acetone and carbon dioxide. The protein is Acetoacetate decarboxylase of Paraburkholderia xenovorans (strain LB400).